We begin with the raw amino-acid sequence, 1223 residues long: Kinesin-like protein costa (1223 aa).

Residues 4–394 form the Kinesin motor domain; sequence PIQVAVRICP…LQFAFKVQCV (391 aa). The tract at residues 13–90 is disordered; the sequence is PYTEPSENRK…LPTDSNGNEN (78 aa). Residues 39 to 62 are compositionally biased toward basic and acidic residues; that stretch reads AKAESFSDSEDNKNDASNRQRPEE. 178–185 contacts ATP; it reads GQRGQGKT. 3 disordered regions span residues 494 to 528, 560 to 604, and 625 to 646; these read RSQK…ESQR, KHPK…SIQP, and TAQP…ESSA. The span at 569–593 shows a compositional bias: basic and acidic residues; it reads QERDKESKLDAPPEKDKEKIEERKT. Coiled-coil stretches lie at residues 658-743, 773-825, and 982-1015; these read AAAN…QGRE, ESGQ…GASG, and NKVI…ERVL. The disordered stretch occupies residues 774 to 799; the sequence is SGQKLKKLQQSMAESRKQQEELEKKI. The segment covering 787-799 has biased composition (basic and acidic residues); the sequence is ESRKQQEELEKKI. Residues 1162–1178 show a composition bias toward low complexity; it reads TTTATATTTTTTTTTTT. Residues 1162-1188 are disordered; that stretch reads TTTATATTTTTTTTTTTGGKGKERGLP.

This sequence belongs to the TRAFAC class myosin-kinesin ATPase superfamily. Kinesin family. KIF27 subfamily. Homodimer (Potential). Binds microtubules. Interacts with ci, smo, sgg, CkIalpha and protein kinase A catalytic subunit.

Its subcellular location is the cytoplasm. It is found in the cytoskeleton. Regulates cubitus interruptus (ci) processing by recruiting multiple kinases to promote its efficient phosphorylation. Scaffolds multiple kinases and ci into proximity to promote its hyperphosphorylation, which then targets it for SCFSlimb/proteasome-mediated processing to generate its repressor form. Hh signaling inhibits ci phosphorylation by interfering with the cos-ci-kinases complex formation. This is Kinesin-like protein costa (cos) from Drosophila pseudoobscura pseudoobscura (Fruit fly).